Here is a 157-residue protein sequence, read N- to C-terminus: Small ribosomal subunit protein uS7 (157 aa).

Belongs to the universal ribosomal protein uS7 family. In terms of assembly, part of the 30S ribosomal subunit. Contacts proteins S9 and S11.

In terms of biological role, one of the primary rRNA binding proteins, it binds directly to 16S rRNA where it nucleates assembly of the head domain of the 30S subunit. Is located at the subunit interface close to the decoding center, probably blocks exit of the E-site tRNA. This chain is Small ribosomal subunit protein uS7, found in Akkermansia muciniphila (strain ATCC BAA-835 / DSM 22959 / JCM 33894 / BCRC 81048 / CCUG 64013 / CIP 107961 / Muc).